Reading from the N-terminus, the 538-residue chain is Syncytin-2 (538 aa).

Residues 1-15 (MGLLLLVLILTPLLA) form the signal peptide. Residues 16–478 (AHRHPDFPLL…GWLNWEGTWK (463 aa)) lie on the Extracellular side of the membrane. Residues 43–46 (CWLC) carry the CXXC motif. 3 cysteine pairs are disulfide-bonded: Cys-43–Cys-46, Cys-43–Cys-439, and Cys-431–Cys-438. N-linked (GlcNAc...) asparagine glycosylation is found at Asn-133, Asn-146, Asn-177, Asn-220, Asn-241, Asn-247, Asn-312, and Asn-332. The segment at 354–374 (FIPLLAGLGIIAGTGTGIAGI) is fusion peptide. A CKS-17 motif is present at residues 414–430 (LQNRRGLDMLTAAQGGI). The short motif at 431–439 (CLALDEKCC) is the CX6CC element. The N-linked (GlcNAc...) asparagine glycan is linked to Asn-443. A helical membrane pass occupies residues 479-499 (WFSWVLPFTGPLVSLLLLLLF). The Cytoplasmic portion of the chain corresponds to 500–538 (GPCLLNLITQFVLSRLQAIKLQTNLSAGCRPHNIQESPF).

Belongs to the gamma type-C retroviral envelope protein family. HERV class-I FRD env subfamily. The surface and transmembrane proteins form a heterodimer. They are attached by non-covalent interactions or by a labile interchain disulfide bond. Specific enzymatic cleavages in vivo yield the mature SU and TM proteins. Post-translationally, the CXXC motif is highly conserved across a broad range of retroviral envelope proteins. It is thought to participate in the formation of a labile disulfide bond possibly with the CX6CC motif present in the transmembrane protein.

It is found in the virion. The protein localises to the cell membrane. Its function is as follows. This endogenous retroviral envelope protein has retained its original fusogenic properties and participates in trophoblast fusion and the formation of a syncytium during placenta morphogenesis. The interaction with MFSD2A is apparently important for this process. Endogenous envelope proteins may have kept, lost or modified their original function during evolution but this one can still make pseudotypes with MLV, HIV-1 or SIV-1 virions and confer infectivity. Retroviral envelope proteins mediate receptor recognition and membrane fusion during early infection. The surface protein mediates receptor recognition, while the transmembrane protein anchors the envelope heterodimer to the viral membrane through one transmembrane domain. The other hydrophobic domain, called fusion peptide, mediates fusion of the viral membrane with the target cell membrane. This chain is Syncytin-2 (ERVFRD-1), found in Pongo pygmaeus (Bornean orangutan).